We begin with the raw amino-acid sequence, 335 residues long: Glyceraldehyde-3-phosphate dehydrogenase 2 (335 aa).

Residues 13 to 14 and G111 each bind NAD(+); that span reads TI. 140 to 142 provides a ligand contact to D-glyceraldehyde 3-phosphate; sequence SCN. Catalysis depends on C141, which acts as the Nucleophile. Residue R169 coordinates NAD(+). Residues T171 and 195–196 contribute to the D-glyceraldehyde 3-phosphate site; that span reads HG. Q300 contributes to the NAD(+) binding site.

Belongs to the glyceraldehyde-3-phosphate dehydrogenase family. As to quaternary structure, homotetramer.

The protein resides in the cytoplasm. It catalyses the reaction D-glyceraldehyde 3-phosphate + phosphate + NADP(+) = (2R)-3-phospho-glyceroyl phosphate + NADPH + H(+). It carries out the reaction D-glyceraldehyde 3-phosphate + phosphate + NAD(+) = (2R)-3-phospho-glyceroyl phosphate + NADH + H(+). It functions in the pathway carbohydrate degradation; glycolysis; pyruvate from D-glyceraldehyde 3-phosphate: step 1/5. The protein is Glyceraldehyde-3-phosphate dehydrogenase 2 (gapB) of Methanosarcina acetivorans (strain ATCC 35395 / DSM 2834 / JCM 12185 / C2A).